Here is a 389-residue protein sequence, read N- to C-terminus: GTPase Obg (389 aa).

The region spanning 1–159 (MKFVDEAKIL…REVLLELMLL (159 aa)) is the Obg domain. The region spanning 160–333 (ADVGMLGMPN…LCWDIMEFLK (174 aa)) is the OBG-type G domain. Residues 166 to 173 (GMPNAGKS), 191 to 195 (FTTLV), 213 to 216 (DIPG), 283 to 286 (NKVD), and 314 to 316 (AAI) each bind GTP. Ser173 and Thr193 together coordinate Mg(2+). Residues 362–389 (QLENPDLEDDDEDWDEEDDDGVEFIYQR) form a disordered region. Positions 364–383 (ENPDLEDDDEDWDEEDDDGV) are enriched in acidic residues.

Belongs to the TRAFAC class OBG-HflX-like GTPase superfamily. OBG GTPase family. As to quaternary structure, monomer. It depends on Mg(2+) as a cofactor.

It localises to the cytoplasm. Its function is as follows. An essential GTPase which binds GTP, GDP and possibly (p)ppGpp with moderate affinity, with high nucleotide exchange rates and a fairly low GTP hydrolysis rate. Plays a role in control of the cell cycle, stress response, ribosome biogenesis and in those bacteria that undergo differentiation, in morphogenesis control. The protein is GTPase Obg of Proteus mirabilis (strain HI4320).